Here is a 438-residue protein sequence, read N- to C-terminus: MYSAVSSRSTVVSSRPLSSSRSLVVSSSYPKMSTASTTYSGVASSGSRISSTRYSTIGSALGGAGGFGTRSSLTLSGNAVISNEKETMQDLNDRLSNYLETVRRLENANQQLEIQIREAMEKRGPSVRDYSNYEKIIKELRDQIYDTTVDNARLVLAIDNARLAADDFRVKWEAELAIRQSVDSDINGLRKVIDDTNLGRLQLESEIEVLKEELVFIKKNHEDEVIALRNQVNSCGVQVDLDAPKGTDLAEIMATLRAEYEAMINKNKDDAEHWYQSKVETFQVETVQNTEALQTAKTELSDLRRRIQSLEIELESNRSMRASLEDTLRDTELRYAMEMERLGALVSRIEAELAQVRTDMQRQAQDYEVLLNAKMKLEAEIATYRHLLGGEDSDTLSLQDALSAMKVSNVQTVQKIVVTTQKLVDGKVVEDSTVTETK.

The head stretch occupies residues 4 to 83; that stretch reads AVSSRSTVVS…TLSGNAVISN (80 aa). The interval 84-119 is coil 1A; it reads EKETMQDLNDRLSNYLETVRRLENANQQLEIQIREA. The 312-residue stretch at 84-395 folds into the IF rod domain; it reads EKETMQDLND…HLLGGEDSDT (312 aa). Positions 120-136 are linker 1; it reads MEKRGPSVRDYSNYEKI. Residues 137–228 form a coil 1B region; it reads IKELRDQIYD…KNHEDEVIAL (92 aa). The tract at residues 229 to 252 is linker 12; that stretch reads RNQVNSCGVQVDLDAPKGTDLAEI. The segment at 253-393 is coil 2; the sequence is MATLRAEYEA…YRHLLGGEDS (141 aa). Residues 394 to 438 are tail; the sequence is DTLSLQDALSAMKVSNVQTVQKIVVTTQKLVDGKVVEDSTVTETK.

This sequence belongs to the intermediate filament family. Heterotetramer of two type I and two type II keratins. Keratin-18 associates with keratin-8. Post-translationally, phosphorylated. In terms of processing, proteolytically cleaved by caspases during epithelial cell apoptosis. As to expression, expressed at low levels in skin.

Its function is as follows. When phosphorylated, plays a role in filament reorganization. The polypeptide is Keratin, type I cytoskeletal 18 (Protopterus aethiopicus (Marbled lungfish)).